Reading from the N-terminus, the 231-residue chain is Orotidine 5'-phosphate decarboxylase (231 aa).

Substrate contacts are provided by residues Asp12, Lys34, 61 to 70, Thr116, Arg177, Gln186, Gly206, and Arg207; that span reads DMKLLDIDNT. Lys63 (proton donor) is an active-site residue.

Belongs to the OMP decarboxylase family. Type 1 subfamily. In terms of assembly, homodimer.

The catalysed reaction is orotidine 5'-phosphate + H(+) = UMP + CO2. Its pathway is pyrimidine metabolism; UMP biosynthesis via de novo pathway; UMP from orotate: step 2/2. In terms of biological role, catalyzes the decarboxylation of orotidine 5'-monophosphate (OMP) to uridine 5'-monophosphate (UMP). The polypeptide is Orotidine 5'-phosphate decarboxylase (Allorhizobium ampelinum (strain ATCC BAA-846 / DSM 112012 / S4) (Agrobacterium vitis (strain S4))).